The primary structure comprises 178 residues: Probable DNA-directed RNA polymerase subunit delta (178 aa).

An HTH HARE-type domain is found at 14-81 (LSLIDVAHFI…GNNTWGLRAW (68 aa)). Disordered stretches follow at residues 89-122 (EEVQ…DYDD) and 141-178 (LDED…PEDK). 3 stretches are compositionally biased toward acidic residues: residues 105–122 (DDDD…DYDD), 141–150 (LDEDEDDDDH), and 161–178 (TVED…PEDK).

The protein belongs to the RpoE family. As to quaternary structure, RNAP is composed of a core of 2 alpha, a beta and a beta' subunits. The core is associated with a delta subunit and one of several sigma factors.

Its function is as follows. Participates in both the initiation and recycling phases of transcription. In the presence of the delta subunit, RNAP displays an increased specificity of transcription, a decreased affinity for nucleic acids, and an increased efficiency of RNA synthesis because of enhanced recycling. The sequence is that of Probable DNA-directed RNA polymerase subunit delta from Listeria innocua serovar 6a (strain ATCC BAA-680 / CLIP 11262).